We begin with the raw amino-acid sequence, 592 residues long: Frizzled-5 (592 aa).

Positions Met1–Ser38 are cleaved as a signal peptide. At Ala39–Trp248 the chain is on the extracellular side. One can recognise an FZ domain in the interval Ser40–Arg161. 5 disulfides stabilise this stretch: Cys45–Cys106, Cys53–Cys99, Cys90–Cys128, Cys117–Cys158, and Cys121–Cys145. The disordered stretch occupies residues Asn162–Pro192. A helical membrane pass occupies residues Ile249–Ile269. Residues Asp270–Pro280 are Cytoplasmic-facing. Residues Ile281 to Ala301 form a helical membrane-spanning segment. Residues Gly302–Cys327 are Extracellular-facing. The helical transmembrane segment at Thr328–Leu348 threads the bilayer. The Cytoplasmic portion of the chain corresponds to Ser349–Gln370. The chain crosses the membrane as a helical span at residues Tyr371–Ser391. Topologically, residues Ser392 to Gly414 are extracellular. The chain crosses the membrane as a helical span at residues Phe415–Phe435. The Cytoplasmic segment spans residues Val436 to Arg461. Residues Ile462–Tyr482 traverse the membrane as a helical segment. The Extracellular segment spans residues Glu483–Ala512. The helical transmembrane segment at Val513–Trp533 threads the bilayer. Over Ser534–Val592 the chain is Cytoplasmic.

It belongs to the G-protein coupled receptor Fz/Smo family.

The protein resides in the cell membrane. It localises to the golgi apparatus membrane. Its subcellular location is the synapse. It is found in the perikaryon. The protein localises to the cell projection. The protein resides in the dendrite. It localises to the axon. In terms of biological role, receptor for Wnt proteins. Following binding, activates the canonical Wnt/beta-catenin signaling pathway. Also activates wnt non-canonical signaling. In neurons, activation of the Wnt pathway promotes formation of synapses. May be involved in transduction and intercellular transmission of polarity information during tissue morphogenesis and/or in differentiated tissues. Plays a role in early eye development, possibly through wnt non-canonical signaling. As a receptor for wnt11, promotes eye formation, at least partially, by antagonizing the Wnt/beta-catenin pathway. In addition, promotes coherence of eye field cells, potentially contributing to the coordinated morphogenetic behaviors of cells in the nascent eye field. The sequence is that of Frizzled-5 (fzd5) from Danio rerio (Zebrafish).